We begin with the raw amino-acid sequence, 84 residues long: uncharacterized protein (84 aa).

2 consecutive transmembrane segments (helical) span residues 27–47 (INHH…LAML) and 52–72 (IGHV…FVLI).

To M.tuberculosis Rv2876.

The protein resides in the cell membrane. This is an uncharacterized protein from Mycobacterium leprae (strain TN).